A 497-amino-acid chain; its full sequence is Glycerol kinase (497 aa).

Thr12 serves as a coordination point for ADP. ATP is bound by residues Thr12, Thr13, and Ser14. Thr12 contacts sn-glycerol 3-phosphate. Residue Arg16 coordinates ADP. The sn-glycerol 3-phosphate site is built by Arg82, Glu83, Tyr134, and Asp243. 5 residues coordinate glycerol: Arg82, Glu83, Tyr134, Asp243, and Gln244. Residues Thr265 and Gly308 each contribute to the ADP site. Positions 265, 308, 312, and 409 each coordinate ATP. Residues Gly409 and Asn413 each contribute to the ADP site.

The protein belongs to the FGGY kinase family.

It carries out the reaction glycerol + ATP = sn-glycerol 3-phosphate + ADP + H(+). It participates in polyol metabolism; glycerol degradation via glycerol kinase pathway; sn-glycerol 3-phosphate from glycerol: step 1/1. With respect to regulation, inhibited by fructose 1,6-bisphosphate (FBP). Its function is as follows. Key enzyme in the regulation of glycerol uptake and metabolism. Catalyzes the phosphorylation of glycerol to yield sn-glycerol 3-phosphate. This Nitratidesulfovibrio vulgaris (strain ATCC 29579 / DSM 644 / CCUG 34227 / NCIMB 8303 / VKM B-1760 / Hildenborough) (Desulfovibrio vulgaris) protein is Glycerol kinase.